We begin with the raw amino-acid sequence, 404 residues long: Argininosuccinate synthase (404 aa).

Residues 10 to 18 and alanine 37 contribute to the ATP site; that span reads AFSGGLDTS. The L-citrulline site is built by tyrosine 88 and serine 93. Glycine 118 contributes to the ATP binding site. L-aspartate contacts are provided by threonine 120, asparagine 124, and aspartate 125. L-citrulline is bound at residue asparagine 124. Positions 128, 179, 188, 264, and 276 each coordinate L-citrulline.

Belongs to the argininosuccinate synthase family. Type 1 subfamily. As to quaternary structure, homotetramer.

The protein localises to the cytoplasm. It catalyses the reaction L-citrulline + L-aspartate + ATP = 2-(N(omega)-L-arginino)succinate + AMP + diphosphate + H(+). It functions in the pathway amino-acid biosynthesis; L-arginine biosynthesis; L-arginine from L-ornithine and carbamoyl phosphate: step 2/3. The polypeptide is Argininosuccinate synthase (Nitrosomonas europaea (strain ATCC 19718 / CIP 103999 / KCTC 2705 / NBRC 14298)).